Here is a 149-residue protein sequence, read N- to C-terminus: Large ribosomal subunit protein bL9 (149 aa).

This sequence belongs to the bacterial ribosomal protein bL9 family.

Its function is as follows. Binds to the 23S rRNA. The protein is Large ribosomal subunit protein bL9 of Salmonella dublin (strain CT_02021853).